We begin with the raw amino-acid sequence, 662 residues long: Protein associated with UVRAG as autophagy enhancer (662 aa).

Disordered stretches follow at residues 1 to 34 (MVSQ…RLLN) and 58 to 131 (DVQQ…SLSS). Residues 58 to 71 (DVQQQPQDLQSQVP) show a composition bias toward low complexity. The span at 100-113 (AETTLSEDTTDSVG) shows a compositional bias: polar residues. Residues 114-131 (SASPHGSSEKSSSFSLSS) show a composition bias toward low complexity. The residue at position 157 (S157) is a Phosphoserine; by MTOR. Residues 196–235 (EVFVLPVDVEKENAHFYVADMIISAMEKMKCNILSQQQTE) are interaction with UVRAG. An N6-acetyllysine mark is found at K483, K523, K533, K573, and K633.

In terms of assembly, interacts with UVRAG; the interaction is direct and promotes association with the PI3K/PI3KC3 and HOPS complexes. Interacts with STX17. In terms of processing, phosphorylated by MTOR at Ser-157 under nutrient-rich conditions. Phosphorylation prevents acetylation by KAT5/TIP60 and impairs RUBCNL/PACER function and autophagosome maturation. Under autophagy induction, Phosphorylation by MTOR is repressed, enabling acetylation by KAT5/TIP60. Post-translationally, acetylated by KAT5/TIP60 under autophagy induction, promoting autophagosome maturation and lipid metabolism. Acetylation is prevented by phosphorylation by MTOR. Lys-483 and Lys-573 constitute the key sites for tuning function in autophagy. Expressed weakly in cervical carcinoma cell lines.

The protein resides in the cytoplasmic vesicle. It localises to the autophagosome membrane. In terms of biological role, regulator of autophagy that promotes autophagosome maturation by facilitating the biogenesis of phosphatidylinositol 3-phosphate (PtdIns(3)P) in late steps of autophagy. Acts by antagonizing RUBCN, thereby stimulating phosphatidylinositol 3-kinase activity of the PI3K/PI3KC3 complex. Following anchorage to the autophagosomal SNARE STX17, promotes the recruitment of PI3K/PI3KC3 and HOPS complexes to the autophagosome to regulate the fusion specificity of autophagosomes with late endosomes/lysosomes. Binds phosphoinositides phosphatidylinositol 3-phosphate (PtdIns(3)P), 4-phosphate (PtdIns(4)P) and 5-phosphate (PtdIns(5)P). In addition to its role in autophagy, acts as a regulator of lipid and glycogen homeostasis. May act as a tumor suppressor. The polypeptide is Protein associated with UVRAG as autophagy enhancer (Homo sapiens (Human)).